Consider the following 432-residue polypeptide: Glutamate-1-semialdehyde 2,1-aminomutase 1 (432 aa).

Lys-268 is subject to N6-(pyridoxal phosphate)lysine.

It belongs to the class-III pyridoxal-phosphate-dependent aminotransferase family. HemL subfamily. In terms of assembly, homodimer. Requires pyridoxal 5'-phosphate as cofactor.

It is found in the cytoplasm. The catalysed reaction is (S)-4-amino-5-oxopentanoate = 5-aminolevulinate. It functions in the pathway porphyrin-containing compound metabolism; protoporphyrin-IX biosynthesis; 5-aminolevulinate from L-glutamyl-tRNA(Glu): step 2/2. The sequence is that of Glutamate-1-semialdehyde 2,1-aminomutase 1 from Bacillus mycoides (strain KBAB4) (Bacillus weihenstephanensis).